The following is a 435-amino-acid chain: Probable long-chain-alcohol O-fatty-acyltransferase 11 (435 aa).

The next 11 helical transmembrane spans lie at N7–T27, F36–V56, S59–F79, P120–L140, I149–L169, D200–A220, L238–I258, P263–A283, C300–F320, F363–V383, and F406–V426.

The protein belongs to the wax synthase family.

The protein localises to the membrane. The catalysed reaction is a long chain fatty alcohol + a fatty acyl-CoA = a wax ester + CoA. Functionally, catalyzes the final step in the synthesis of long-chain linear esters (waxes). The protein is Probable long-chain-alcohol O-fatty-acyltransferase 11 of Arabidopsis thaliana (Mouse-ear cress).